A 761-amino-acid polypeptide reads, in one-letter code: Subtilisin-like protease SBT3 (761 aa).

An N-terminal signal peptide occupies residues 1-22; sequence MELLHLLLFSWALSAHLFLALA. A propeptide spanning residues 23 to 112 is cleaved from the precursor; sequence QRSTYIVHLD…AYKDRTVEPH (90 aa). Residues 26–110 form the Inhibitor I9 domain; sequence TYIVHLDKSL…ISAYKDRTVE (85 aa). In terms of domain architecture, Peptidase S8 spans 116 to 606; sequence TSDFLKLNPS…AGHVDPNRAL (491 aa). The active-site Charge relay system is the aspartate 144. An intrachain disulfide couples cysteine 170 to cysteine 181. N-linked (GlcNAc...) (complex) asparagine; alternate glycosylation is found at asparagine 177 and asparagine 203. Residues asparagine 177 and asparagine 203 are each glycosylated (N-linked (GlcNAc...) (paucimannose) asparagine; alternate). Catalysis depends on histidine 215, which acts as the Charge relay system. N-linked (GlcNAc...) (paucimannose) asparagine; partial glycosylation is present at asparagine 376. Cysteines 382 and 401 form a disulfide. Residue serine 538 is the Charge relay system of the active site. The tract at residues 574–598 is disordered; it reads LDNTRKPIKDSDNNKAATPLDMGAG. The span at 575 to 586 shows a compositional bias: basic and acidic residues; sequence DNTRKPIKDSDN. A disulfide bond links cysteine 624 and cysteine 645. Residues asparagine 697 and asparagine 745 are each glycosylated (N-linked (GlcNAc...) (complex) asparagine; alternate). Asparagine 697 and asparagine 745 each carry an N-linked (GlcNAc...) (paucimannose) asparagine; alternate glycan. The interval 756–761 is necessary for prodomain cleavage and secretion; that stretch reads PIIEVW.

Belongs to the peptidase S8 family. As to quaternary structure, homodimer. Propeptide is internally cleaved at Asn-38 and Asp-52 in a pH-dependent manner leading to the dissociation of the propeptide from the catalytic domain and resulting in the release of the active subtilase. Cleavage occurs at pH 5.7 and to a stronger extent at pH 5.2. In terms of tissue distribution, expressed in flowers, cotyledons and leaves with the highest expression in roots.

Its subcellular location is the secreted. With respect to regulation, inhibited by 1 mM 4-(2-aminoethyl)-benzenesulfonyl fluoride (AEBSF), a general inhibitor of serine proteinases, but not by the more selective serine protease inhibitors N-alpha-tosyl-L-lysinyl-chloromethylketone (TLCK), N-tosyl-L-phenylalaninyl-chloromethylketone (TPCK), leupeptin, aprotinin or benzamidine. Its proteolytic activity is autoinhibited by the non-covalent binding of the propeptide to the catalytic domain. No effect on activity by the addition of CaCl(2) or calcium chelators. In terms of biological role, serine protease. Has preference for Gln in the P1 position and Lys in the P2 position of oligopeptide substrates. Active also with His in the P1 position. Involved in resistance against insects partly by regulating expression of systemic wound response genes and possibly by its post-ingestive activity in the insect gut. Apart from the role in defense, may be involved in regulation of pectin methylesterases (PMEs) activity and pectin methylesterification of the cell wall. The polypeptide is Subtilisin-like protease SBT3 (Solanum lycopersicum (Tomato)).